We begin with the raw amino-acid sequence, 261 residues long: 14-3-3-like protein B (261 aa).

Positions 237-261 are disordered; it reads DIPEDGEDSQKANGTAKFGGGDDAE.

The protein belongs to the 14-3-3 family.

This Vicia faba (Broad bean) protein is 14-3-3-like protein B.